Consider the following 157-residue polypeptide: Transcription elongation factor GreA (157 aa).

Residues 47-75 (SGEYEDAKKAQALLEGRIRELKHLLSRAE) adopt a coiled-coil conformation.

The protein belongs to the GreA/GreB family.

In terms of biological role, necessary for efficient RNA polymerase transcription elongation past template-encoded arresting sites. The arresting sites in DNA have the property of trapping a certain fraction of elongating RNA polymerases that pass through, resulting in locked ternary complexes. Cleavage of the nascent transcript by cleavage factors such as GreA or GreB allows the resumption of elongation from the new 3'terminus. GreA releases sequences of 2 to 3 nucleotides. This Chloroflexus aggregans (strain MD-66 / DSM 9485) protein is Transcription elongation factor GreA.